We begin with the raw amino-acid sequence, 548 residues long: Cytochrome P450 monooxygenase lcsK (548 aa).

The next 2 membrane-spanning stretches (helical) occupy residues 28-48 (HAYP…LWAF) and 68-88 (VLLF…RLFF). N-linked (GlcNAc...) asparagine glycosylation is found at N172, N223, N242, and N404. C487 is a binding site for heme.

The protein belongs to the cytochrome P450 family. Requires heme as cofactor.

It localises to the membrane. The protein operates within secondary metabolite biosynthesis. Cytochrome P450 monooxygenase; part of the gene cluster that mediates the biosynthesis of the lipopeptide antibiotics leucinostatins that show extensive biological activities, including antimalarial, antiviral, antibacterial, antifungal, and antitumor activities, as well as phytotoxic. Leucinostatin A contains nine amino acid residues, including the unusual amino acid 4-methyl-L-proline (MePro), 2-amino-6-hydroxy-4-methyl-8-oxodecanoic acid (AHyMeOA), 3-hydroxyleucine (HyLeu), alpha-aminoisobutyric acid (AIB), beta-Ala, a 4-methylhex-2-enoic acid at the N-terminus as well as a N1,N1-dimethylpropane-1,2-diamine (DPD) at the C-terminus. The biosynthesis of leucinostatins is probably initiated with the assembly of 4-methylhex-2-enoic acid by a reducing PKS. Two reducing polyketide synthases, lcsB and lcsC, have been identified in the cluster and it is not clear which is the one that assembles 4-methylhex-2-enoic acid since both contain KS, AT, DH, cMT, ER, KR and ACP domains. The polyketide residue might be transferred to the NRPS lcsA, mediated by two additional enzymes, the acyl-CoA ligase lcsD and the thioesterase lcsE. The linear polyketide carboxylic acid, which is released from PKS, is converted to a CoA thioester by lcsD, and then lcsE hydrolyzes the thiol bond and shuttles the polyketide intermediate to lcsA. The C domain of the first module catalyzed the condensation of 4-methylhex-2-enoic acid and MePro carried by domain A1, followed by successive condensations of nine amino acids to trigger the elongation of the linear peptide. A5 and A6 domains of lcsA are proposed to incorporate leucine, A2 AHyMeOA, and A3 incorporates HyLeu. A4, A7 and A8 incorporate AIB. The AHyMeOA in leucinostatin A activated by the A2 might be produced by the second PKS (lcsB or lcsC) present within the cluster. The MePro is probably produced via leucine cyclization and may originate from a separate pathway, independent of the cluster. Another nonproteinogenic amino acid, beta-Ala, could be produced by an aspartic acid decarboxylase also localized outside of the cluster. Two candidates are VFPBJ_01400 and VFPBJ_10476. The final peptide scaffold may be released by the NAD(P)H-dependent thioester reductase (TE) at the C-terminal region of lcsA. Transamination of the lcsA product by the transaminase lcsP may produce DPD at the C-terminus. Further hydroxylation steps performed alternatively by the cytochrome P450 monooxygenases lcsI, lcsK and lcsN then yield the non-methylated leucinostatins precursor. It is also possible that leucines can be hydroxylated prior to their incorporation into the peptide. Varying extents of methylation then lead to the formation of leucinostatins A and B. This chain is Cytochrome P450 monooxygenase lcsK, found in Purpureocillium lilacinum (Paecilomyces lilacinus).